The sequence spans 199 residues: Recombination protein RecR (199 aa).

The segment at 58 to 73 (CSVCNNITDVDPCVFC) adopts a C4-type zinc-finger fold. The region spanning 81-176 (RLVCVVEEPT…RLTRIATGVP (96 aa)) is the Toprim domain.

The protein belongs to the RecR family.

Its function is as follows. May play a role in DNA repair. It seems to be involved in an RecBC-independent recombinational process of DNA repair. It may act with RecF and RecO. In Acidobacterium capsulatum (strain ATCC 51196 / DSM 11244 / BCRC 80197 / JCM 7670 / NBRC 15755 / NCIMB 13165 / 161), this protein is Recombination protein RecR.